A 454-amino-acid chain; its full sequence is PC-esterase domain-containing protein 1A (454 aa).

This sequence belongs to the PC-esterase family.

The sequence is that of PC-esterase domain-containing protein 1A (PCED1A) from Homo sapiens (Human).